The sequence spans 209 residues: Ribosomal RNA large subunit methyltransferase E (209 aa).

5 residues coordinate S-adenosyl-L-methionine: glycine 60, tryptophan 62, aspartate 80, aspartate 96, and aspartate 121. Residue lysine 161 is the Proton acceptor of the active site.

This sequence belongs to the class I-like SAM-binding methyltransferase superfamily. RNA methyltransferase RlmE family.

It localises to the cytoplasm. It catalyses the reaction uridine(2552) in 23S rRNA + S-adenosyl-L-methionine = 2'-O-methyluridine(2552) in 23S rRNA + S-adenosyl-L-homocysteine + H(+). Functionally, specifically methylates the uridine in position 2552 of 23S rRNA at the 2'-O position of the ribose in the fully assembled 50S ribosomal subunit. The polypeptide is Ribosomal RNA large subunit methyltransferase E (Pseudomonas fluorescens (strain Pf0-1)).